The chain runs to 407 residues: Elongation factor Tu (407 aa).

One can recognise a tr-type G domain in the interval 10 to 217 (KPHVNVGTIG…TLDEYIPEPE (208 aa)). A G1 region spans residues 19-26 (GHVDHGKT). A GTP-binding site is contributed by 19–26 (GHVDHGKT). Thr-26 is a Mg(2+) binding site. Positions 60–64 (GITIA) are G2. The interval 81–84 (DCPG) is G3. Residues 81 to 85 (DCPGH) and 136 to 139 (NKAD) contribute to the GTP site. The G4 stretch occupies residues 136–139 (NKAD). The segment at 184–186 (SAL) is G5.

It belongs to the TRAFAC class translation factor GTPase superfamily. Classic translation factor GTPase family. EF-Tu/EF-1A subfamily. Monomer.

Its subcellular location is the cytoplasm. It carries out the reaction GTP + H2O = GDP + phosphate + H(+). Its function is as follows. GTP hydrolase that promotes the GTP-dependent binding of aminoacyl-tRNA to the A-site of ribosomes during protein biosynthesis. This chain is Elongation factor Tu, found in Teredinibacter turnerae (strain ATCC 39867 / T7901).